A 672-amino-acid polypeptide reads, in one-letter code: Glycine--tRNA ligase beta subunit (672 aa).

This sequence belongs to the class-II aminoacyl-tRNA synthetase family. As to quaternary structure, tetramer of two alpha and two beta subunits.

The protein resides in the cytoplasm. It catalyses the reaction tRNA(Gly) + glycine + ATP = glycyl-tRNA(Gly) + AMP + diphosphate. In Thermotoga maritima (strain ATCC 43589 / DSM 3109 / JCM 10099 / NBRC 100826 / MSB8), this protein is Glycine--tRNA ligase beta subunit (glyS).